A 634-amino-acid polypeptide reads, in one-letter code: Polyadenylate-binding protein 1A (634 aa).

4 consecutive RRM domains span residues Ala-11–Arg-89, Gly-99–Ser-175, Thr-191–Lys-268, and Val-294–Arg-370. Positions Gln-541–Ala-618 constitute a PABC domain.

This sequence belongs to the polyadenylate-binding protein type-1 family. As to quaternary structure, interacts with ybx1; interaction recruits pabpc1a on C5-methylcytosine (m5C)-containing mRNAs, preventing their degradation.

Its subcellular location is the cytoplasm. Binds the poly(A) tail of mRNA. Prevents mRNA deadenylation and confers poly(A) stability. Binds to N6-methyladenosine (m6A)-containing mRNAs. Stimulates the translation of mRNAs to which it is bound, acting, at least in part, with dazl. Involved in the maternal-to-zygotic transition in early embryo via interaction with ybx1: interaction recruits pabpc1a on C5-methylcytosine (m5C)-containing maternal mRNAs, preventing their degradation. The polypeptide is Polyadenylate-binding protein 1A (Danio rerio (Zebrafish)).